Consider the following 270-residue polypeptide: Putative carbamate hydrolase RutD (270 aa).

The protein belongs to the AB hydrolase superfamily. Hydrolase RutD family.

The enzyme catalyses carbamate + 2 H(+) = NH4(+) + CO2. Involved in pyrimidine catabolism. May facilitate the hydrolysis of carbamate, a reaction that can also occur spontaneously. This Escherichia coli (strain SMS-3-5 / SECEC) protein is Putative carbamate hydrolase RutD.